Consider the following 219-residue polypeptide: Small ribosomal subunit protein uS3c (219 aa).

The KH type-2 domain occupies 47–118 (IKKNIRISSG…KINIAITRIT (72 aa)).

It belongs to the universal ribosomal protein uS3 family. In terms of assembly, part of the 30S ribosomal subunit.

The protein localises to the plastid. It localises to the chloroplast. In Citrus sinensis (Sweet orange), this protein is Small ribosomal subunit protein uS3c (rps3).